Consider the following 3344-residue polypeptide: Genome polyprotein (3344 aa).

A Peptidase S30 domain is found at 408 to 547 (IVGNSKINYI…RSVYAKMDQY (140 aa)). Catalysis depends on for P1 proteinase activity residues His-456, Asp-465, and Ser-499. An Involved in interaction with stylet and aphid transmission motif is present at residues 598 to 601 (KITC). An Involved in virions binding and aphid transmission motif is present at residues 856-858 (PTK). Residues 882-1004 (MYIAKKGYCY…DSEMKHYIVG (123 aa)) form the Peptidase C6 domain. Residues Cys-890 and His-963 each act as for helper component proteinase activity in the active site. Residues 1473–1625 (EIAHSPEREF…TQFPTKIVTE (153 aa)) enclose the Helicase ATP-binding domain. 1486–1493 (GAVGSGKS) contributes to the ATP binding site. The DECH box signature appears at 1575 to 1578 (DECH). The Helicase C-terminal domain occupies 1644 to 1803 (DVTAFADNIL…GLPVMTHNVG (160 aa)). The short motif at 2134-2141 (KKGNKKGK) is the Nuclear localization signal element. Position 2156 is an O-(5'-phospho-RNA)-tyrosine (Tyr-2156). The Peptidase C4 domain maps to 2283 to 2499 (GKSLCQGMRN…LSWGALKVWE (217 aa)). Catalysis depends on for nuclear inclusion protein A activity residues His-2327, Asp-2362, and Cys-2431. Positions 2761-2885 (WVYCDADGSQ…AIHPDHEHVL (125 aa)) constitute a RdRp catalytic domain. Positions 3059 to 3093 (KNEAVDAGLNEKLKEKEKQKEKEKEKQKEKEKDGA) are enriched in basic and acidic residues. Residues 3059–3116 (KNEAVDAGLNEKLKEKEKQKEKEKEKQKEKEKDGASDGNDVSTSTKTGERDRDVNVGT) form a disordered region.

The protein belongs to the potyviridae genome polyprotein family. As to quaternary structure, interacts with host eIF4E protein (via cap-binding region); this interaction mediates the translation of the VPg-viral RNA conjugates. Part of a complex that comprises VPg, RNA, host EIF4E and EIF4G; this interaction mediates the translation of the VPg-viral RNA conjugates. Post-translationally, VPg is uridylylated by the polymerase and is covalently attached to the 5'-end of the genomic RNA. This uridylylated form acts as a nucleotide-peptide primer for the polymerase. In terms of processing, potyviral RNA is expressed as two polyproteins which undergo post-translational proteolytic processing. Genome polyprotein is processed by NIa-pro, P1 and HC-pro proteinases resulting in the production of at least ten individual proteins. P3N-PIPO polyprotein is cleaved by P1 and HC-pro proteinases resulting in the production of three individual proteins. The P1 proteinase and the HC-pro cleave only their respective C-termini autocatalytically. 6K1 is essential for proper proteolytic separation of P3 from CI.

The protein localises to the host cytoplasmic vesicle. It localises to the host nucleus. Its subcellular location is the virion. It catalyses the reaction RNA(n) + a ribonucleoside 5'-triphosphate = RNA(n+1) + diphosphate. The enzyme catalyses Hydrolyzes glutaminyl bonds, and activity is further restricted by preferences for the amino acids in P6 - P1' that vary with the species of potyvirus, e.g. Glu-Xaa-Xaa-Tyr-Xaa-Gln-|-(Ser or Gly) for the enzyme from tobacco etch virus. The natural substrate is the viral polyprotein, but other proteins and oligopeptides containing the appropriate consensus sequence are also cleaved.. It carries out the reaction Hydrolyzes a Gly-|-Gly bond at its own C-terminus, commonly in the sequence -Tyr-Xaa-Val-Gly-|-Gly, in the processing of the potyviral polyprotein.. Required for aphid transmission and also has proteolytic activity. Only cleaves a Gly-Gly dipeptide at its own C-terminus. Interacts with virions and aphid stylets. Acts as a suppressor of RNA-mediated gene silencing, also known as post-transcriptional gene silencing (PTGS), a mechanism of plant viral defense that limits the accumulation of viral RNAs. May have RNA-binding activity. Its function is as follows. Has helicase activity. It may be involved in replication. In terms of biological role, indispensable for virus replication. Functionally, mediates the cap-independent, EIF4E-dependent translation of viral genomic RNAs. Binds to the cap-binding site of host EIF4E and thus interferes with the host EIF4E-dependent mRNA export and translation. VPg-RNA directly binds EIF4E and is a template for transcription. Also forms trimeric complexes with EIF4E-EIF4G, which are templates for translation. Has RNA-binding and proteolytic activities. Its function is as follows. An RNA-dependent RNA polymerase that plays an essential role in the virus replication. In terms of biological role, involved in aphid transmission, cell-to-cell and systemis movement, encapsidation of the viral RNA and in the regulation of viral RNA amplification. This is Genome polyprotein from Carica papaya (Papaya).